A 224-amino-acid polypeptide reads, in one-letter code: MTTCLIVDDDPKILEYVSKYIEREHFETIVQSSAENALSYLETHQVDIAIVDVMMGKMSGFELCKILKEDFDIPVIMLTARDALSDKEQAYLTGTDDYVTKPFEVKELMFRIKAVLKRYNVNINNEVSIGNLTLNQSYLEIQSSSKSMNLPNKEFQLLFLLASNPRQVFNRDALIEKIWGFDYEGDERTVDVHIKRLRKRLEKIDASVTIHTVRGLGYKVDDHV.

The 114-residue stretch at 3–116 (TCLIVDDDPK…ELMFRIKAVL (114 aa)) folds into the Response regulatory domain. 4-aspartylphosphate is present on Asp-52. A DNA-binding region (ompR/PhoB-type) is located at residues 124–222 (NNEVSIGNLT…VRGLGYKVDD (99 aa)).

Post-translationally, phosphorylated by HssS.

The protein resides in the cytoplasm. In terms of biological role, member of the two-component regulatory system HssS/HssR involved in intracellular heme homeostasis and tempering of staphylococcal virulence. Phosphorylated HssR binds to a direct repeat sequence within hrtAB promoter and activates the expression of hrtAB, an efflux pump, in response to extracellular heme, hemin, hemoglobin or blood. The polypeptide is Heme response regulator HssR (hssR) (Staphylococcus saprophyticus subsp. saprophyticus (strain ATCC 15305 / DSM 20229 / NCIMB 8711 / NCTC 7292 / S-41)).